A 209-amino-acid chain; its full sequence is Ribosomal RNA large subunit methyltransferase E (209 aa).

S-adenosyl-L-methionine is bound by residues glycine 63, tryptophan 65, aspartate 83, aspartate 99, and aspartate 124. Lysine 164 functions as the Proton acceptor in the catalytic mechanism.

Belongs to the class I-like SAM-binding methyltransferase superfamily. RNA methyltransferase RlmE family.

Its subcellular location is the cytoplasm. The catalysed reaction is uridine(2552) in 23S rRNA + S-adenosyl-L-methionine = 2'-O-methyluridine(2552) in 23S rRNA + S-adenosyl-L-homocysteine + H(+). Its function is as follows. Specifically methylates the uridine in position 2552 of 23S rRNA at the 2'-O position of the ribose in the fully assembled 50S ribosomal subunit. The chain is Ribosomal RNA large subunit methyltransferase E from Shewanella frigidimarina (strain NCIMB 400).